Here is a 266-residue protein sequence, read N- to C-terminus: Apolipoprotein A-I (266 aa).

The first 18 residues, 1–18 (MKAVVLTLAVLFLTGSQA), serve as a signal peptide directing secretion. 2 tandem repeats follow at residues 67–88 (LKLL…EQLG) and 89–110 (PVTQ…QEMN). The 10 X approximate tandem repeats stretch occupies residues 67–266 (LKLLDNWDSL…EEASKKLNAQ (200 aa)). Methionine sulfoxide is present on M109. A 3; half-length repeat occupies 111–121 (KDVEEMKTKVQ). 5 repeat units span residues 122-143 (PYLD…QKVE), 144-165 (PLGS…EKLS), 166-187 (PLGE…TQLA), 188-209 (PYSE…ESGG), and 210-231 (ASLA…EKAK). A 9; half-length repeat occupies 232-242 (PALEDLRQGLL). The stretch at 243-266 (PVLESFKVSLLSALEEASKKLNAQ) is repeat 10.

This sequence belongs to the apolipoprotein A1/A4/E family. As to quaternary structure, homodimer. Interacts with APOA1BP and CLU. Component of a sperm activating protein complex (SPAP), consisting of APOA1, an immunoglobulin heavy chain, an immunoglobulin light chain and albumin. Interacts with NDRG1. Interacts with SCGB3A2. Interacts with NAXE and YJEFN3. Glycosylated. In terms of processing, palmitoylated. Post-translationally, phosphorylation sites are present in the extracellular medium. Major protein of plasma HDL, also found in chylomicrons.

The protein resides in the secreted. Participates in the reverse transport of cholesterol from tissues to the liver for excretion by promoting cholesterol efflux from tissues and by acting as a cofactor for the lecithin cholesterol acyltransferase (LCAT). As part of the SPAP complex, activates spermatozoa motility. In Carlito syrichta (Philippine tarsier), this protein is Apolipoprotein A-I (APOA1).